Here is a 194-residue protein sequence, read N- to C-terminus: Peptidyl-tRNA hydrolase (194 aa).

Tyrosine 17 provides a ligand contact to tRNA. The Proton acceptor role is filled by histidine 22. Positions 69, 71, and 117 each coordinate tRNA.

This sequence belongs to the PTH family. Monomer.

The protein resides in the cytoplasm. It catalyses the reaction an N-acyl-L-alpha-aminoacyl-tRNA + H2O = an N-acyl-L-amino acid + a tRNA + H(+). Hydrolyzes ribosome-free peptidyl-tRNAs (with 1 or more amino acids incorporated), which drop off the ribosome during protein synthesis, or as a result of ribosome stalling. Its function is as follows. Catalyzes the release of premature peptidyl moieties from peptidyl-tRNA molecules trapped in stalled 50S ribosomal subunits, and thus maintains levels of free tRNAs and 50S ribosomes. The polypeptide is Peptidyl-tRNA hydrolase (Renibacterium salmoninarum (strain ATCC 33209 / DSM 20767 / JCM 11484 / NBRC 15589 / NCIMB 2235)).